The sequence spans 254 residues: Cell division protein FtsQ (254 aa).

Residues Met-1–Ala-27 are Cytoplasmic-facing. A helical membrane pass occupies residues Phe-28–Leu-48. Over Glu-49–Arg-254 the chain is Periplasmic. The region spanning Lys-54–Tyr-124 is the POTRA domain.

It belongs to the FtsQ/DivIB family. FtsQ subfamily. As to quaternary structure, part of a complex composed of FtsB, FtsL and FtsQ.

The protein localises to the cell inner membrane. Essential cell division protein. May link together the upstream cell division proteins, which are predominantly cytoplasmic, with the downstream cell division proteins, which are predominantly periplasmic. May control correct divisome assembly. The sequence is that of Cell division protein FtsQ from Haemophilus influenzae (strain ATCC 51907 / DSM 11121 / KW20 / Rd).